Here is a 165-residue protein sequence, read N- to C-terminus: Small ribosomal subunit protein eS10 (165 aa).

Tyr-12 bears the Phosphotyrosine mark. Residues 90 to 165 (VPATLRRSRP…FGRGRGQPPQ (76 aa)) are disordered. A compositionally biased stretch (basic and acidic residues) spans 97 to 128 (SRPETGRPRPKGPEGERPARFTRGEADRDTYR). Glycyl lysine isopeptide (Lys-Gly) (interchain with G-Cter in ubiquitin) cross-links involve residues Lys-138 and Lys-139. A Phosphoserine modification is found at Ser-146. An Omega-N-methylarginine modification is found at Arg-153. Residues 154–165 (GGFGRGRGQPPQ) show a composition bias toward gly residues. Symmetric dimethylarginine occurs at positions 158 and 160.

It belongs to the eukaryotic ribosomal protein eS10 family. Component of the small ribosomal subunit. The methylated form interacts with NPM1. Methylated by PRMT5. Methylation is necessary for its interaction with NPS1, its localization in the granular component (GC) region of the nucleolus, for the proper assembly of ribosomes, protein synthesis and optimal cell proliferation. Post-translationally, monoubiquitinated by ZNF598 when a ribosome has stalled during translation of poly(A) sequences, leading to preclude synthesis of a long poly-lysine tail and initiate the ribosome quality control (RQC) pathway to degrade the potentially detrimental aberrant nascent polypeptide. Deubiquitinated by OTUD3 and USP21, antagonizing ZNF598 activity. Deubiquitinated by OTUD1, antagonizing ZNF598 activity and stimulating formation of polysomes: deubiquitination by OTUD1 promotes stability and translation of a subset mRNAs with a high abundance of rare codons can limit the translation rate. Deubiquitinated by USP10.

It localises to the cytoplasm. It is found in the nucleus. The protein localises to the nucleolus. Functionally, component of the 40S ribosomal subunit. The ribosome is a large ribonucleoprotein complex responsible for the synthesis of proteins in the cell. The sequence is that of Small ribosomal subunit protein eS10 (Rps10) from Rattus norvegicus (Rat).